Reading from the N-terminus, the 204-residue chain is Ribonuclease HII (204 aa).

The RNase H type-2 domain maps to 1–197 (MTLGIDEAGR…KNRILNPKLL (197 aa)). Residues aspartate 6, glutamate 7, and aspartate 103 each coordinate a divalent metal cation.

It belongs to the RNase HII family. Mn(2+) serves as cofactor. The cofactor is Mg(2+).

It is found in the cytoplasm. It carries out the reaction Endonucleolytic cleavage to 5'-phosphomonoester.. Functionally, endonuclease that specifically degrades the RNA of RNA-DNA hybrids. The protein is Ribonuclease HII of Helicobacter pylori (strain HPAG1).